The primary structure comprises 462 residues: Argininosuccinate lyase (462 aa).

This sequence belongs to the lyase 1 family. Argininosuccinate lyase subfamily.

It is found in the cytoplasm. It carries out the reaction 2-(N(omega)-L-arginino)succinate = fumarate + L-arginine. It functions in the pathway amino-acid biosynthesis; L-arginine biosynthesis; L-arginine from L-ornithine and carbamoyl phosphate: step 3/3. This is Argininosuccinate lyase from Methylobacterium sp. (strain 4-46).